The chain runs to 144 residues: MNFKYIVAVSFLIASGYARSEENDVQSLSQREVLEEESLREIRGIGGALLSAGKSALKGLAKGLVEHFANGKRTAEDHEVMKRLKAVMRDLDSLDHPEEASERETRGFNQEEIANLFTKKEKRILGPVLSLVGSALGGLIKKIG.

An N-terminal signal peptide occupies residues 1–18; that stretch reads MNFKYIVAVSFLIASGYA. Positions 19–43 are excised as a propeptide; sequence RSEENDVQSLSQREVLEEESLREIR. Asn70 is modified (asparagine amide). The propeptide occupies 74–123; that stretch reads TAEDHEVMKRLKAVMRDLDSLDHPEEASERETRGFNQEEIANLFTKKEKR. An Isoleucine amide modification is found at Ile143.

Belongs to the bombinin family. In terms of tissue distribution, expressed by the skin glands.

Its subcellular location is the secreted. Functionally, maximin-z shows antimicrobial activity against bacteria and against the fungus C.albicans. It has little hemolytic activity. In terms of biological role, maximin-Hv shows antimicrobial activity against bacteria and against the fungus C.albicans. Shows strong hemolytic activity. The polypeptide is Maximins z/Hv (Bombina maxima (Giant fire-bellied toad)).